A 66-amino-acid chain; its full sequence is DNA-directed RNA polymerase subunit omega (66 aa).

It belongs to the RNA polymerase subunit omega family. In terms of assembly, the RNAP catalytic core consists of 2 alpha, 1 beta, 1 beta' and 1 omega subunit. When a sigma factor is associated with the core the holoenzyme is formed, which can initiate transcription.

The enzyme catalyses RNA(n) + a ribonucleoside 5'-triphosphate = RNA(n+1) + diphosphate. Its function is as follows. Promotes RNA polymerase assembly. Latches the N- and C-terminal regions of the beta' subunit thereby facilitating its interaction with the beta and alpha subunits. The polypeptide is DNA-directed RNA polymerase subunit omega (Geobacillus kaustophilus (strain HTA426)).